A 229-amino-acid chain; its full sequence is Large ribosomal subunit protein uL1 (229 aa).

Belongs to the universal ribosomal protein uL1 family. Part of the 50S ribosomal subunit.

Its function is as follows. Binds directly to 23S rRNA. The L1 stalk is quite mobile in the ribosome, and is involved in E site tRNA release. Protein L1 is also a translational repressor protein, it controls the translation of the L11 operon by binding to its mRNA. The chain is Large ribosomal subunit protein uL1 from Caulobacter vibrioides (strain ATCC 19089 / CIP 103742 / CB 15) (Caulobacter crescentus).